We begin with the raw amino-acid sequence, 379 residues long: Mating-type protein MAT-1 (379 aa).

Residues 60 to 117 constitute a DNA-binding region (alpha box); that stretch reads KARKALNAFVGFRCYYITIPMFKPWPMKKLSNLIGLLWEADPNKSLWSLMAKAWSTIR.

It belongs to the MATALPHA1 family.

The protein resides in the nucleus. Its function is as follows. Mating type proteins are sequence specific DNA-binding proteins that act as master switches in fungal differentiation by controlling gene expression in a cell type-specific fashion. Transcriptional activator that induces the transcription of alpha-specific genes. This Cochliobolus carbonum (strain 26-R-13) (Maize leaf spot fungus) protein is Mating-type protein MAT-1 (MAT1).